We begin with the raw amino-acid sequence, 130 residues long: Snaclec B8 (130 aa).

3 disulfides stabilise this stretch: Cys2–Cys13, Cys30–Cys124, and Cys99–Cys116. The region spanning 9–125 (HEGHCYKVFK…CELAYHFICM (117 aa)) is the C-type lectin domain.

It belongs to the snaclec family. As to quaternary structure, heterodimer; disulfide-linked. As to expression, expressed by the venom gland.

The protein localises to the secreted. Functionally, interferes with one step of hemostasis (modulation of platelet aggregation, or coagulation cascade, for example). This chain is Snaclec B8, found in Macrovipera lebetinus (Levantine viper).